Reading from the N-terminus, the 256-residue chain is Glutamate racemase (256 aa).

Substrate contacts are provided by residues 12 to 13 and 44 to 45; these read DS and YG. Residue cysteine 75 is the Proton donor/acceptor of the active site. 76-77 is a binding site for substrate; that stretch reads NT. The active-site Proton donor/acceptor is cysteine 186. 187 to 188 lines the substrate pocket; that stretch reads TH.

The protein belongs to the aspartate/glutamate racemases family.

It catalyses the reaction L-glutamate = D-glutamate. The protein operates within cell wall biogenesis; peptidoglycan biosynthesis. Functionally, provides the (R)-glutamate required for cell wall biosynthesis. This chain is Glutamate racemase, found in Clostridium acetobutylicum (strain ATCC 824 / DSM 792 / JCM 1419 / IAM 19013 / LMG 5710 / NBRC 13948 / NRRL B-527 / VKM B-1787 / 2291 / W).